We begin with the raw amino-acid sequence, 192 residues long: Thymidylate kinase (192 aa).

7 to 14 (GIDCVGKS) contacts ATP.

This sequence belongs to the thymidylate kinase family.

The enzyme catalyses dTMP + ATP = dTDP + ADP. Functionally, phosphorylation of dTMP to form dTDP in both de novo and salvage pathways of dTTP synthesis. This is Thymidylate kinase from Campylobacter jejuni subsp. jejuni serotype O:6 (strain 81116 / NCTC 11828).